Here is a 173-residue protein sequence, read N- to C-terminus: Large ribosomal subunit protein uL14mz (173 aa).

The N-terminal 61 residues, M1–G61, are a transit peptide targeting the mitochondrion.

The protein belongs to the universal ribosomal protein uL14 family. As to quaternary structure, part of the mitochondrial 50S ribosomal subunit. Mostly expressed in leaves and inflorescences, including floral organs and meristems, and, to a lower extent, in pistils.

The protein resides in the mitochondrion. Functionally, binds to 23S rRNA in mitochondrion. In Arabidopsis thaliana (Mouse-ear cress), this protein is Large ribosomal subunit protein uL14mz (HLP).